A 262-amino-acid polypeptide reads, in one-letter code: G patch domain-containing protein 11 (262 aa).

3 stretches are compositionally biased toward basic and acidic residues: residues L39–E61, E114–N127, and Q136–K165. 2 disordered regions span residues L39 to Q71 and G88 to A169. The stretch at K41–A62 forms a coiled coil. The 47-residue stretch at S70 to V116 folds into the G-patch domain.

It belongs to the GPATCH11 family.

The protein resides in the chromosome. The protein localises to the centromere. It localises to the kinetochore. The polypeptide is G patch domain-containing protein 11 (gpatch11) (Danio rerio (Zebrafish)).